The primary structure comprises 467 residues: Asparagine--tRNA ligase (467 aa).

It belongs to the class-II aminoacyl-tRNA synthetase family. As to quaternary structure, homodimer.

Its subcellular location is the cytoplasm. The catalysed reaction is tRNA(Asn) + L-asparagine + ATP = L-asparaginyl-tRNA(Asn) + AMP + diphosphate + H(+). This Haemophilus influenzae (strain ATCC 51907 / DSM 11121 / KW20 / Rd) protein is Asparagine--tRNA ligase.